Consider the following 463-residue polypeptide: Homoserine O-acetyltransferase FUB5 (463 aa).

The AB hydrolase-1 domain occupies 113–436; the sequence is NVMIICHALS…VSDDGHDAFL (324 aa). The active-site Nucleophile is the serine 211. The segment covering 296–312 has biased composition (basic and acidic residues); it reads RFGRDTGSKKKTQKQES. The interval 296–331 is disordered; that stretch reads RFGRDTGSKKKTQKQESKTLPSNSTPIHSHSGADET. Residues aspartate 403 and histidine 432 contribute to the active site.

The protein belongs to the AB hydrolase superfamily. MetX family.

It catalyses the reaction L-homoserine + acetyl-CoA = O-acetyl-L-homoserine + CoA. It functions in the pathway mycotoxin biosynthesis. Homoserine O-acetyltransferase; part of the gene cluster that mediates the biosynthesis of fusaric acid, a mycotoxin with low to moderate toxicity to animals and humans, but with high phytotoxic properties. L-aspartate is suggested as fusaric acid amino acid precursor that is activated and further processed to O-acetyl-L-homoserine by cluster enzymes aspartate kinase FUB3 and homoserine O-acetyltransferase FUB5, as well as enzymes of the primary metabolism. The polyketide synthase (PKS) FUB1 generates the triketide trans-2-hexenal which is presumptively released by the hydrolase FUB4 and linked to the NRPS-bound amino acid precursor by NAD(P)-dependent dehydrogenase FUB6. FUB1, FUB4, and the non-canonical NRPS Fub8 may form an enzyme complex. Further processing of the NRPS-bound intermediate might be carried out by FUB6 and the sulfhydrylase FUB7, enabling a spontaneous electrocyclization to close the carbon backbone of fusaric acid. Dihydrofusaric acid is likely to be released via reduction by the thioester reductase (TR) domain of FUB8 whereupon the final oxidation to fusaric acid may (also) be performed by the FMN-dependent dehydrogenase FUB9. The protein is Homoserine O-acetyltransferase FUB5 of Gibberella moniliformis (strain M3125 / FGSC 7600) (Maize ear and stalk rot fungus).